Consider the following 282-residue polypeptide: D-alanine aminotransferase (282 aa).

Tyr-32 lines the substrate pocket. Residue Arg-51 participates in pyridoxal 5'-phosphate binding. Residues Arg-99 and His-101 each contribute to the substrate site. Catalysis depends on Lys-146, which acts as the Proton acceptor. An N6-(pyridoxal phosphate)lysine modification is found at Lys-146. Residue Glu-178 coordinates pyridoxal 5'-phosphate.

This sequence belongs to the class-IV pyridoxal-phosphate-dependent aminotransferase family. Homodimer. It depends on pyridoxal 5'-phosphate as a cofactor.

It catalyses the reaction D-alanine + 2-oxoglutarate = D-glutamate + pyruvate. Its function is as follows. Acts on the D-isomers of alanine, leucine, aspartate, glutamate, aminobutyrate, norvaline and asparagine. The enzyme transfers an amino group from a substrate D-amino acid to the pyridoxal phosphate cofactor to form pyridoxamine and an alpha-keto acid in the first half-reaction. The second half-reaction is the reverse of the first, transferring the amino group from the pyridoxamine to a second alpha-keto acid to form the product D-amino acid via a ping-pong mechanism. This is an important process in the formation of D-alanine and D-glutamate, which are essential bacterial cell wall components. This Staphylococcus aureus (strain MSSA476) protein is D-alanine aminotransferase (dat).